Here is a 216-residue protein sequence, read N- to C-terminus: Somatotropin (216 aa).

The N-terminal stretch at 1–26 is a signal peptide; the sequence is MAASPRNSVLLAFALLCLPWPQEVGA. H45 provides a ligand contact to Zn(2+). C78 and C189 are disulfide-bonded. S131 carries the phosphoserine modification. Residue E198 coordinates Zn(2+). C206 and C214 are disulfide-bonded.

Belongs to the somatotropin/prolactin family.

The protein localises to the secreted. Its function is as follows. Plays an important role in growth control. Its major role in stimulating body growth is to stimulate the liver and other tissues to secrete IGF1. It stimulates both the differentiation and proliferation of myoblasts. It also stimulates amino acid uptake and protein synthesis in muscle and other tissues. The sequence is that of Somatotropin (GH1) from Canis lupus familiaris (Dog).